Reading from the N-terminus, the 40-residue chain is Meleagrin (40 aa).

Gln1 carries the pyrrolidone carboxylic acid modification. 3 cysteine pairs are disulfide-bonded: Cys6/Cys33, Cys12/Cys28, and Cys16/Cys32.

The protein belongs to the transferrin family.

The sequence is that of Meleagrin from Meleagris gallopavo (Wild turkey).